The sequence spans 336 residues: Cytoskeleton protein RodZ (336 aa).

Topologically, residues 1–111 (MNTEATHDQN…LGKRRKKRDG (111 aa)) are cytoplasmic. Residues 19–71 (LRNAREQLGLSQQAVAERLCLKVSTVRDIEEDKAPADLASTFLRGYIRSYARL) form the HTH cro/C1-type domain. The H-T-H motif DNA-binding region spans 30–49 (QQAVAERLCLKVSTVRDIEE). Residues 112 to 132 (WLMTFTWLVLFVVIGLSGAWW) traverse the membrane as a helical; Signal-anchor for type II membrane protein segment. The Periplasmic segment spans residues 133 to 336 (WQDHKAQQEE…TLNAEQSPAQ (204 aa)). Positions 148 to 164 (DQSSAELNNNQSQSVPL) are enriched in polar residues. Residues 148–245 (DQSSAELNNN…PLPTDQAGVT (98 aa)) form a disordered region. Residues 165 to 201 (DTSTTTDQAMATTPTSPVDTTATNTQTPAATTAPSPT) show a composition bias toward low complexity. Over residues 202–217 (VDSQQNAVVPPSQANV) the composition is skewed to polar residues. Low complexity predominate over residues 218-240 (DTAATPAPAATTTPDGAAPLPTD).

It belongs to the RodZ family.

The protein resides in the cell inner membrane. In terms of biological role, cytoskeletal protein that is involved in cell-shape control through regulation of the length of the long axis. The polypeptide is Cytoskeleton protein RodZ (Escherichia coli O7:K1 (strain IAI39 / ExPEC)).